Here is a 398-residue protein sequence, read N- to C-terminus: Alpha-monoglucosyldiacylglycerol synthase (398 aa).

This sequence belongs to the glycosyltransferase group 1 family. Glycosyltransferase 4 subfamily. The cofactor is Mg(2+).

The protein resides in the cell membrane. It catalyses the reaction a 1,2-diacyl-sn-glycerol + UDP-alpha-D-glucose = a 1,2-diacyl-3-O-(alpha-D-glucopyranosyl)-sn-glycerol + UDP + H(+). Activated by the negatively charged lipids phosphatidylglycerol (PG), cardiolipin (CL), dodecylphosphate-rac-glycerol (PDG), 1,2-dioleoyl-phosphatidylglycerol (DOPG) and phosphatidylserine (PS). Glucosyltransferase involved in the biosynthesis of the non-bilayer-prone membrane lipid alpha-monoglucosyldiacylglycerol. This is a major component for maintaining a certain anionic lipid surface charge density, for balancing the bilayer to non-bilayer phase equilibria and for keeping a constant lipid bilayer spontaneous curvature (curvature packing stress). Catalyzes the transfer of a glucosyl residue from UDP-Glc to diacylglycerol (DAG) acceptor to form the corresponding alpha-glucosyl-DAG (1,2-diacyl-3-O-(alpha-D-glucopyranosyl)-sn-glycerol). It can only use UDP-Glc as sugar donor and DAG is the preferred substrate. The chain is Alpha-monoglucosyldiacylglycerol synthase (mgs) from Acholeplasma laidlawii.